A 119-amino-acid chain; its full sequence is Beta-2-microglobulin (119 aa).

The signal sequence occupies residues Met-1 to Ala-20. Positions Pro-25–Lys-114 constitute an Ig-like C1-type domain. An intrachain disulfide couples Cys-45 to Cys-100.

Belongs to the beta-2-microglobulin family. Heterodimer of an alpha chain and a beta chain. Beta-2-microglobulin is the beta-chain of major histocompatibility complex class I molecules.

The protein resides in the secreted. Its function is as follows. Component of the class I major histocompatibility complex (MHC). Involved in the presentation of peptide antigens to the immune system. The protein is Beta-2-microglobulin (B2M) of Plecturocebus moloch (Dusky titi monkey).